The sequence spans 450 residues: ATP-dependent protease ATPase subunit HslU (450 aa).

ATP is bound by residues V29, 71-76 (GVGKTE), D261, E328, and R400.

It belongs to the ClpX chaperone family. HslU subfamily. A double ring-shaped homohexamer of HslV is capped on each side by a ring-shaped HslU homohexamer. The assembly of the HslU/HslV complex is dependent on binding of ATP.

It localises to the cytoplasm. Its function is as follows. ATPase subunit of a proteasome-like degradation complex; this subunit has chaperone activity. The binding of ATP and its subsequent hydrolysis by HslU are essential for unfolding of protein substrates subsequently hydrolyzed by HslV. HslU recognizes the N-terminal part of its protein substrates and unfolds these before they are guided to HslV for hydrolysis. This chain is ATP-dependent protease ATPase subunit HslU, found in Rickettsia felis (strain ATCC VR-1525 / URRWXCal2) (Rickettsia azadi).